A 214-amino-acid chain; its full sequence is External core antigen (214 aa).

An N-terminal signal peptide occupies residues M1–A19. The segment at G25–L27 is HBEAG. The disordered stretch occupies residues N165–C214. The span at V178–S207 shows a compositional bias: basic residues. A 1; half-length repeat occupies S186–P192. A 3 X 8 AA repeats of S-P-R-R-R-R-S-Q region spans residues S186 to Q208. Positions S186–C214 are excised as a propeptide. Tandem repeats lie at residues S193–Q200 and S201–Q208.

It belongs to the orthohepadnavirus precore antigen family. In terms of assembly, homodimerizes. In terms of processing, phosphorylated. Post-translationally, cleaved by host furin.

The protein localises to the secreted. It localises to the host nucleus. Functionally, may regulate immune response to the intracellular capsid in acting as a T-cell tolerogen, by having an immunoregulatory effect which prevents destruction of infected cells by cytotoxic T-cells. This immune regulation may predispose to chronicity during perinatal infections and prevent severe liver injury during adult infections. This Homo sapiens (Human) protein is External core antigen.